Here is a 185-residue protein sequence, read N- to C-terminus: Ribosome-recycling factor (185 aa).

This sequence belongs to the RRF family.

The protein resides in the cytoplasm. In terms of biological role, responsible for the release of ribosomes from messenger RNA at the termination of protein biosynthesis. May increase the efficiency of translation by recycling ribosomes from one round of translation to another. This Shewanella halifaxensis (strain HAW-EB4) protein is Ribosome-recycling factor.